The following is a 218-amino-acid chain: Adenylate kinase (218 aa).

10 to 15 (GAGKGT) contributes to the ATP binding site. Residues 30-59 (STGDMLRAAVKAGTPLGIAAKKIMDEGGLV) are NMP. Residues threonine 31, arginine 36, 57–59 (GLV), 85–88 (GFPR), and glutamine 92 each bind AMP. The interval 122 to 159 (GRRVHPASGRTYHVKFNPPKVAGRDDVTGEELIQRDDD) is LID. ATP-binding positions include arginine 123 and 132–133 (TY). The AMP site is built by arginine 156 and arginine 167. Glycine 203 contacts ATP.

It belongs to the adenylate kinase family. In terms of assembly, monomer.

Its subcellular location is the cytoplasm. The catalysed reaction is AMP + ATP = 2 ADP. It participates in purine metabolism; AMP biosynthesis via salvage pathway; AMP from ADP: step 1/1. In terms of biological role, catalyzes the reversible transfer of the terminal phosphate group between ATP and AMP. Plays an important role in cellular energy homeostasis and in adenine nucleotide metabolism. This is Adenylate kinase from Herminiimonas arsenicoxydans.